The primary structure comprises 473 residues: Bifunctional protein HldE (473 aa).

The segment at 1 to 318 (MKLTLPRYDQ…RAVQREEGSE (318 aa)) is ribokinase. 194 to 197 (NLHE) provides a ligand contact to ATP. Residue Asp-263 is part of the active site. The interval 343–473 (FTNGCFDILH…TAIVEKIRNK (131 aa)) is cytidylyltransferase.

The protein in the N-terminal section; belongs to the carbohydrate kinase PfkB family. This sequence in the C-terminal section; belongs to the cytidylyltransferase family. Homodimer.

The enzyme catalyses D-glycero-beta-D-manno-heptose 7-phosphate + ATP = D-glycero-beta-D-manno-heptose 1,7-bisphosphate + ADP + H(+). The catalysed reaction is D-glycero-beta-D-manno-heptose 1-phosphate + ATP + H(+) = ADP-D-glycero-beta-D-manno-heptose + diphosphate. It functions in the pathway nucleotide-sugar biosynthesis; ADP-L-glycero-beta-D-manno-heptose biosynthesis; ADP-L-glycero-beta-D-manno-heptose from D-glycero-beta-D-manno-heptose 7-phosphate: step 1/4. The protein operates within nucleotide-sugar biosynthesis; ADP-L-glycero-beta-D-manno-heptose biosynthesis; ADP-L-glycero-beta-D-manno-heptose from D-glycero-beta-D-manno-heptose 7-phosphate: step 3/4. Its function is as follows. Catalyzes the phosphorylation of D-glycero-D-manno-heptose 7-phosphate at the C-1 position to selectively form D-glycero-beta-D-manno-heptose-1,7-bisphosphate. In terms of biological role, catalyzes the ADP transfer from ATP to D-glycero-beta-D-manno-heptose 1-phosphate, yielding ADP-D-glycero-beta-D-manno-heptose. This chain is Bifunctional protein HldE, found in Ectopseudomonas mendocina (strain ymp) (Pseudomonas mendocina).